Here is a 135-residue protein sequence, read N- to C-terminus: uncharacterized protein (135 aa).

The tract at residues 1-70 (MKPDWPRRGA…RWRPQGTGTG (70 aa)) is disordered.

This is an uncharacterized protein from Homo sapiens (Human).